Reading from the N-terminus, the 122-residue chain is Small ribosomal subunit protein bS6 (122 aa).

The protein belongs to the bacterial ribosomal protein bS6 family.

Its function is as follows. Binds together with bS18 to 16S ribosomal RNA. This Methylibium petroleiphilum (strain ATCC BAA-1232 / LMG 22953 / PM1) protein is Small ribosomal subunit protein bS6.